The primary structure comprises 75 residues: RNA-binding protein KhpA (75 aa).

Residues 29 to 75 (SIILELKVSPEDMGKVIGKQGRIAKAIRTVVKAAAIKENKKVVVEII) form the KH domain.

It belongs to the KhpA RNA-binding protein family. Forms a complex with KhpB.

The protein localises to the cytoplasm. In terms of biological role, a probable RNA chaperone. Forms a complex with KhpB which binds to cellular RNA and controls its expression. Plays a role in peptidoglycan (PG) homeostasis and cell length regulation. This Clostridium perfringens (strain 13 / Type A) protein is RNA-binding protein KhpA.